A 467-amino-acid chain; its full sequence is UDP-N-acetylmuramate--L-alanine ligase (467 aa).

Residue 114-120 (GTHGKTT) participates in ATP binding.

This sequence belongs to the MurCDEF family.

It localises to the cytoplasm. It carries out the reaction UDP-N-acetyl-alpha-D-muramate + L-alanine + ATP = UDP-N-acetyl-alpha-D-muramoyl-L-alanine + ADP + phosphate + H(+). The protein operates within cell wall biogenesis; peptidoglycan biosynthesis. Its function is as follows. Cell wall formation. This is UDP-N-acetylmuramate--L-alanine ligase from Rhodopseudomonas palustris (strain TIE-1).